The sequence spans 214 residues: Pyridoxine/pyridoxamine 5'-phosphate oxidase (214 aa).

Residues 11-14 (RREY) and lysine 68 each bind substrate. FMN is bound by residues 63–68 (RLVLLK), 78–79 (FT), arginine 84, lysine 85, and glutamine 107. Substrate-binding residues include tyrosine 125 and arginine 129. FMN is bound by residues 142 to 143 (QS) and tryptophan 187. Substrate is bound at residue 193–195 (RLH). Arginine 197 contacts FMN.

The protein belongs to the pyridoxamine 5'-phosphate oxidase family. Homodimer. Requires FMN as cofactor.

The enzyme catalyses pyridoxamine 5'-phosphate + O2 + H2O = pyridoxal 5'-phosphate + H2O2 + NH4(+). The catalysed reaction is pyridoxine 5'-phosphate + O2 = pyridoxal 5'-phosphate + H2O2. Its pathway is cofactor metabolism; pyridoxal 5'-phosphate salvage; pyridoxal 5'-phosphate from pyridoxamine 5'-phosphate: step 1/1. It participates in cofactor metabolism; pyridoxal 5'-phosphate salvage; pyridoxal 5'-phosphate from pyridoxine 5'-phosphate: step 1/1. Its function is as follows. Catalyzes the oxidation of either pyridoxine 5'-phosphate (PNP) or pyridoxamine 5'-phosphate (PMP) into pyridoxal 5'-phosphate (PLP). The chain is Pyridoxine/pyridoxamine 5'-phosphate oxidase from Blochmanniella floridana.